The primary structure comprises 311 residues: Sensor histidine kinase YcbM (311 aa).

The chain crosses the membrane as a helical span at residues 1-21; the sequence is MTVLWVAAVIALACLNVIQFI. Residues 22–311 are Cytoplasmic-facing; it reads MKKKRDGNLA…FTITLKRMTY (290 aa). Positions 92–310 constitute a Histidine kinase domain; sequence NMSHDLKTPL…AFTITLKRMT (219 aa). His95 is subject to Phosphohistidine; by autocatalysis.

It is found in the cell membrane. It carries out the reaction ATP + protein L-histidine = ADP + protein N-phospho-L-histidine.. Functionally, member of the two-component regulatory system YcbM/YcbL. Probably activates YcbL by phosphorylation. This chain is Sensor histidine kinase YcbM (ycbM), found in Bacillus subtilis (strain 168).